A 183-amino-acid polypeptide reads, in one-letter code: ATP synthase subunit delta (183 aa).

The protein belongs to the ATPase delta chain family. F-type ATPases have 2 components, F(1) - the catalytic core - and F(0) - the membrane proton channel. F(1) has five subunits: alpha(3), beta(3), gamma(1), delta(1), epsilon(1). F(0) has three main subunits: a(1), b(2) and c(10-14). The alpha and beta chains form an alternating ring which encloses part of the gamma chain. F(1) is attached to F(0) by a central stalk formed by the gamma and epsilon chains, while a peripheral stalk is formed by the delta and b chains.

The protein localises to the cell inner membrane. Functionally, f(1)F(0) ATP synthase produces ATP from ADP in the presence of a proton or sodium gradient. F-type ATPases consist of two structural domains, F(1) containing the extramembraneous catalytic core and F(0) containing the membrane proton channel, linked together by a central stalk and a peripheral stalk. During catalysis, ATP synthesis in the catalytic domain of F(1) is coupled via a rotary mechanism of the central stalk subunits to proton translocation. In terms of biological role, this protein is part of the stalk that links CF(0) to CF(1). It either transmits conformational changes from CF(0) to CF(1) or is implicated in proton conduction. The chain is ATP synthase subunit delta from Rickettsia prowazekii (strain Madrid E).